The primary structure comprises 399 residues: Elongation factor Tu (399 aa).

Residues 10 to 209 (KPHVNIGTIG…DVDEYIPTPV (200 aa)) enclose the tr-type G domain. Positions 19 to 26 (GHVDHGKT) are G1. Residue 19–26 (GHVDHGKT) participates in GTP binding. T26 provides a ligand contact to Mg(2+). The interval 62 to 66 (GITIN) is G2. The interval 83-86 (DCPG) is G3. Residues 83 to 87 (DCPGH) and 138 to 141 (NKCD) each bind GTP. Positions 138–141 (NKCD) are G4. Positions 175 to 177 (SAY) are G5.

This sequence belongs to the TRAFAC class translation factor GTPase superfamily. Classic translation factor GTPase family. EF-Tu/EF-1A subfamily. Monomer.

The protein resides in the cytoplasm. The enzyme catalyses GTP + H2O = GDP + phosphate + H(+). GTP hydrolase that promotes the GTP-dependent binding of aminoacyl-tRNA to the A-site of ribosomes during protein biosynthesis. In Bifidobacterium animalis subsp. lactis (strain AD011), this protein is Elongation factor Tu.